A 216-amino-acid polypeptide reads, in one-letter code: 4-hydroxy-tetrahydrodipicolinate reductase (216 aa).

NAD(+) is bound by residues 7–12, 71–73, and 95–98; these read GYSGRM, GTT, and AYNF. Catalysis depends on His127, which acts as the Proton donor/acceptor. Residue His128 coordinates (S)-2,3,4,5-tetrahydrodipicolinate. Lys131 serves as the catalytic Proton donor. 137–138 is a (S)-2,3,4,5-tetrahydrodipicolinate binding site; sequence GT.

It belongs to the DapB family.

The protein localises to the cytoplasm. The enzyme catalyses (S)-2,3,4,5-tetrahydrodipicolinate + NAD(+) + H2O = (2S,4S)-4-hydroxy-2,3,4,5-tetrahydrodipicolinate + NADH + H(+). The catalysed reaction is (S)-2,3,4,5-tetrahydrodipicolinate + NADP(+) + H2O = (2S,4S)-4-hydroxy-2,3,4,5-tetrahydrodipicolinate + NADPH + H(+). Its pathway is amino-acid biosynthesis; L-lysine biosynthesis via DAP pathway; (S)-tetrahydrodipicolinate from L-aspartate: step 4/4. In terms of biological role, catalyzes the conversion of 4-hydroxy-tetrahydrodipicolinate (HTPA) to tetrahydrodipicolinate. The sequence is that of 4-hydroxy-tetrahydrodipicolinate reductase from Thermotoga sp. (strain RQ2).